The primary structure comprises 615 residues: Leucine aminopeptidase 2-1 (615 aa).

Residues 137–139 and 261–266 each bind substrate; these read QCQ and PYGGME. Zn(2+) is bound at residue histidine 290. Glutamate 291 acts as the Proton acceptor in catalysis. Zn(2+) is bound by residues histidine 294 and glutamate 313. The active-site Proton donor is the tyrosine 380.

This sequence belongs to the peptidase M1 family. Requires Zn(2+) as cofactor.

It is found in the cytoplasm. It localises to the nucleus. It catalyses the reaction an epoxide + H2O = an ethanediol. Its function is as follows. Aminopeptidase that preferentially cleaves di- and tripeptides. Also has low epoxide hydrolase activity (in vitro). Can hydrolyze the epoxide leukotriene LTA(4) but it forms preferentially 5,6-dihydroxy-7,9,11,14-eicosatetraenoic acid rather than the cytokine leukotriene B(4) as the product compared to the homologous mammalian enzyme (in vitro). In Meyerozyma guilliermondii (strain ATCC 6260 / CBS 566 / DSM 6381 / JCM 1539 / NBRC 10279 / NRRL Y-324) (Yeast), this protein is Leucine aminopeptidase 2-1.